Here is a 289-residue protein sequence, read N- to C-terminus: MAPAAASLTAPNALAATSLPFLHGRKSGGGGVSVHAGAPSPSRAVAVVARRLWGSASSSRRMVVAAATAAEMAPAASGEEGKPFVEEMRAVAMRLHTKDQAKEGEKEPQAPPVARWEPSVDGYLRFLVDSKLVFETLETIVDRAAVPWYAEFRNTGLERSEQLKKDLEWFKEQGHTIPEPSAPGTTYASYLEELAEKDSQAFICHFYNVYFAHTAGGRMIGKKVSENILNKKELEFYKWEGNLSQLLQNVRNKLNEVASSWTREEKDHCLDETEKSFSYSGDLLRHIFT.

The N-terminal 64 residues, Met-1–Val-64, are a transit peptide targeting the chloroplast. His-96 provides a ligand contact to heme b.

The protein belongs to the heme oxygenase family.

The protein resides in the plastid. It is found in the chloroplast. It carries out the reaction heme b + 3 reduced [NADPH--hemoprotein reductase] + 3 O2 = biliverdin IXalpha + CO + Fe(2+) + 3 oxidized [NADPH--hemoprotein reductase] + 3 H2O + H(+). Functionally, catalyzes the opening of the heme ring to form the open-chain tetrapyrrole biliverdin IX with the release of iron and carbon monoxide (CO). Is a key enzyme in the synthesis of the chromophore of the phytochrome family of plant photoreceptors. Essential for photoperiod response and repression of flowering through cytochromes that inhibit flowering by affecting both HD1 and EHD1 flowering pathways. The polypeptide is Heme oxygenase 1, chloroplastic (HO1) (Oryza sativa subsp. japonica (Rice)).